We begin with the raw amino-acid sequence, 113 residues long: Ribosome-binding factor A (113 aa).

This sequence belongs to the RbfA family. As to quaternary structure, monomer. Binds 30S ribosomal subunits, but not 50S ribosomal subunits or 70S ribosomes.

It is found in the cytoplasm. One of several proteins that assist in the late maturation steps of the functional core of the 30S ribosomal subunit. Associates with free 30S ribosomal subunits (but not with 30S subunits that are part of 70S ribosomes or polysomes). Required for efficient processing of 16S rRNA. May interact with the 5'-terminal helix region of 16S rRNA. This Oceanobacillus iheyensis (strain DSM 14371 / CIP 107618 / JCM 11309 / KCTC 3954 / HTE831) protein is Ribosome-binding factor A.